Here is a 66-residue protein sequence, read N- to C-terminus: Large ribosomal subunit protein bL33c (66 aa).

The protein belongs to the bacterial ribosomal protein bL33 family.

The protein resides in the plastid. It localises to the chloroplast. In Gossypium barbadense (Sea Island cotton), this protein is Large ribosomal subunit protein bL33c.